Consider the following 452-residue polypeptide: Glutamyl-tRNA(Gln) amidotransferase subunit A (452 aa).

Residues lysine 56 and serine 131 each act as charge relay system in the active site. Serine 155 serves as the catalytic Acyl-ester intermediate.

Belongs to the amidase family. GatA subfamily. Heterotrimer of A, B and C subunits.

The enzyme catalyses L-glutamyl-tRNA(Gln) + L-glutamine + ATP + H2O = L-glutaminyl-tRNA(Gln) + L-glutamate + ADP + phosphate + H(+). In terms of biological role, allows the formation of correctly charged Gln-tRNA(Gln) through the transamidation of misacylated Glu-tRNA(Gln) in organisms which lack glutaminyl-tRNA synthetase. The reaction takes place in the presence of glutamine and ATP through an activated gamma-phospho-Glu-tRNA(Gln). The polypeptide is Glutamyl-tRNA(Gln) amidotransferase subunit A (Campylobacter hominis (strain ATCC BAA-381 / DSM 21671 / CCUG 45161 / LMG 19568 / NCTC 13146 / CH001A)).